Reading from the N-terminus, the 119-residue chain is Phosphoribosyl-AMP cyclohydrolase (119 aa).

Mg(2+) is bound at residue aspartate 77. Zn(2+) is bound at residue cysteine 78. Mg(2+) contacts are provided by aspartate 79 and aspartate 81. Residues cysteine 94 and cysteine 101 each coordinate Zn(2+).

It belongs to the PRA-CH family. As to quaternary structure, homodimer. Requires Mg(2+) as cofactor. Zn(2+) is required as a cofactor.

The protein localises to the cytoplasm. It carries out the reaction 1-(5-phospho-beta-D-ribosyl)-5'-AMP + H2O = 1-(5-phospho-beta-D-ribosyl)-5-[(5-phospho-beta-D-ribosylamino)methylideneamino]imidazole-4-carboxamide. It functions in the pathway amino-acid biosynthesis; L-histidine biosynthesis; L-histidine from 5-phospho-alpha-D-ribose 1-diphosphate: step 3/9. In terms of biological role, catalyzes the hydrolysis of the adenine ring of phosphoribosyl-AMP. The sequence is that of Phosphoribosyl-AMP cyclohydrolase from Cereibacter sphaeroides (strain ATCC 17023 / DSM 158 / JCM 6121 / CCUG 31486 / LMG 2827 / NBRC 12203 / NCIMB 8253 / ATH 2.4.1.) (Rhodobacter sphaeroides).